Reading from the N-terminus, the 138-residue chain is Putative pre-16S rRNA nuclease (138 aa).

It belongs to the YqgF nuclease family.

The protein resides in the cytoplasm. Functionally, could be a nuclease involved in processing of the 5'-end of pre-16S rRNA. This Bacillus subtilis (strain 168) protein is Putative pre-16S rRNA nuclease (yrrK).